A 199-amino-acid polypeptide reads, in one-letter code: Small ribosomal subunit protein uS4 (199 aa).

The S4 RNA-binding domain maps to 91–154 (SRLDNVVYRL…KDLIIVKEAL (64 aa)).

Belongs to the universal ribosomal protein uS4 family. As to quaternary structure, part of the 30S ribosomal subunit. Contacts protein S5. The interaction surface between S4 and S5 is involved in control of translational fidelity.

Its function is as follows. One of the primary rRNA binding proteins, it binds directly to 16S rRNA where it nucleates assembly of the body of the 30S subunit. With S5 and S12 plays an important role in translational accuracy. This chain is Small ribosomal subunit protein uS4, found in Phytoplasma mali (strain AT).